The sequence spans 443 residues: Chromosome partition protein MukF (443 aa).

The interval 209 to 237 (LDETSGNLRELQDTLNAAGDKLQAQLLRI) is leucine-zipper.

This sequence belongs to the MukF family. Interacts, and probably forms a ternary complex, with MukE and MukB via its C-terminal region. The complex formation is stimulated by calcium or magnesium. It is required for an interaction between MukE and MukB.

Its subcellular location is the cytoplasm. It localises to the nucleoid. Its function is as follows. Involved in chromosome condensation, segregation and cell cycle progression. May participate in facilitating chromosome segregation by condensation DNA from both sides of a centrally located replisome during cell division. Not required for mini-F plasmid partitioning. Probably acts via its interaction with MukB and MukE. Overexpression results in anucleate cells. It has a calcium binding activity. This chain is Chromosome partition protein MukF, found in Actinobacillus pleuropneumoniae serotype 5b (strain L20).